The chain runs to 429 residues: Adenylosuccinate synthetase (429 aa).

Residues 12-18 (GDEGKGK) and 40-42 (GHT) contribute to the GTP site. The active-site Proton acceptor is D13. Positions 13 and 40 each coordinate Mg(2+). IMP-binding positions include 13–16 (DEGK), 38–41 (NAGH), T128, R142, Q223, T238, and R302. Catalysis depends on H41, which acts as the Proton donor. 298 to 304 (VNTGRKR) contacts substrate. GTP is bound by residues R304, 330–332 (KLD), and 412–414 (GVG).

It belongs to the adenylosuccinate synthetase family. As to quaternary structure, homodimer. The cofactor is Mg(2+).

The protein localises to the cytoplasm. It carries out the reaction IMP + L-aspartate + GTP = N(6)-(1,2-dicarboxyethyl)-AMP + GDP + phosphate + 2 H(+). It functions in the pathway purine metabolism; AMP biosynthesis via de novo pathway; AMP from IMP: step 1/2. Plays an important role in the de novo pathway of purine nucleotide biosynthesis. Catalyzes the first committed step in the biosynthesis of AMP from IMP. The protein is Adenylosuccinate synthetase of Corynebacterium glutamicum (strain R).